A 401-amino-acid chain; its full sequence is Adenosine 3'-phospho 5'-phosphosulfate transporter 2 (401 aa).

N-linked (GlcNAc...) asparagine glycosylation is found at Asn12 and Asn71. A run of 6 helical transmembrane segments spans residues 78 to 98 (LTQFFICVAGVFVFYLIYGYL), 111 to 131 (YGWYLTLVQFAFYSIFGLIEL), 147 to 167 (MIIAFLTVGTMGLSNTSLGYL), 170 to 190 (PTQVIFKCCKLIPVMLGGVFI), 200 to 220 (VSAAICMSLGLIWFTLADSTI), and 223 to 243 (NFNLTGVVLISLALCADAVIG). The N-linked (GlcNAc...) asparagine glycan is linked to Asn254. A run of 4 helical transmembrane segments spans residues 267–287 (IGFVYILLGLTCTSGLGPAVT), 298–317 (GYAFLFSLTGYFGISFVLAL), 324–346 (LIAVTVTTGRKAMTIVLSFIFFA), and 349–369 (FTFQYVWSGLLVFLGIFLNVY).

Belongs to the nucleotide-sugar transporter family. SLC35B subfamily.

The protein resides in the golgi apparatus membrane. It catalyses the reaction 3'-phosphoadenylyl sulfate(in) + adenosine 3',5'-bisphosphate(out) = 3'-phosphoadenylyl sulfate(out) + adenosine 3',5'-bisphosphate(in). In terms of biological role, probably functions as a 3'-phosphoadenylyl sulfate:adenosine 3',5'-bisphosphate antiporter at the Golgi membranes. Mediates the transport from the cytosol into the lumen of the Golgi of 3'-phosphoadenylyl sulfate/adenosine 3'-phospho 5'-phosphosulfate (PAPS), a universal sulfuryl donor for sulfation events that take place in that compartment. The polypeptide is Adenosine 3'-phospho 5'-phosphosulfate transporter 2 (Pongo abelii (Sumatran orangutan)).